A 36-amino-acid chain; its full sequence is Potassium channel toxin alpha-KTx 16.9 (36 aa).

3 disulfide bridges follow: cysteine 7–cysteine 28, cysteine 13–cysteine 33, and cysteine 17–cysteine 35.

This sequence belongs to the short scorpion toxin superfamily. Potassium channel inhibitor family. Alpha-KTx 16 subfamily. In terms of tissue distribution, expressed by the venom gland.

The protein resides in the secreted. Functionally, poorly competes with (125)I-kaliotoxin binding on rat brain synaptosome (IC(50)&gt;100 nM). Is a poor Kv1.3/KCNA3 ligand. May have as real target KCa1.1/KCNMA1 channel. Shows weak toxicity on mice. The polypeptide is Potassium channel toxin alpha-KTx 16.9 (Buthus paris (Scorpion)).